We begin with the raw amino-acid sequence, 95 residues long: Embryonic abundant protein 1 (95 aa).

Residues 1–10 (MASGQQQQGR) show a composition bias toward polar residues. The disordered stretch occupies residues 1–95 (MASGQQQQGR…IDESKYKTKS (95 aa)). Basic and acidic residues-rich tracts occupy residues 40–64 (AEGR…EMGR) and 75–95 (GGER…KTKS).

The protein belongs to the small hydrophilic plant seed protein family. As to expression, expressed in dry seeds and immature embryos.

Its function is as follows. Em protein may act as a cytoplasm protectant during desiccation. The protein is Embryonic abundant protein 1 (EMP1) of Oryza sativa subsp. japonica (Rice).